The sequence spans 218 residues: Ras-related protein Rab-4A (218 aa).

GTP is bound by residues G23, T24, G25, K26, S27, C28, S42, H44, and T45. A Mg(2+)-binding site is contributed by S27. Residues 44-49 carry the Switch 1 motif; the sequence is HTIGVE. Mg(2+) contacts are provided by T45 and D68. The Switch 2 signature appears at 70–79; the sequence is AGQERFRSVT. G71 lines the GTP pocket. Q72 carries the 5-glutamyl serotonin modification. The GTP site is built by N126, K127, D129, A157, and L158. S190 carries the post-translational modification Phosphoserine. At S204 the chain carries Phosphoserine; by CDK1. 2 S-geranylgeranyl cysteine lipidation sites follow: C216 and C218. Cysteine methyl ester is present on C218.

Belongs to the small GTPase superfamily. Rab family. Interacts with SGSM1, SGSM2 and SGSM3. Interacts with RAB11FIP1, RABEP1, ZFYVE20 and RUFY1. Interacts (membrane-bound form) with NDRG1; the interaction involves NDRG1 in vesicular recycling of E-cadherin. Interacts (in GTP-bound form) with GRIPAP1 (via N-terminus). Interacts with RABEP1 and RBSN. Does not interact with HPS4. Interacts with RABEP2; this interaction may mediate VEGFR2 cell surface expression. The cofactor is Mg(2+). In terms of processing, serotonylation of Gln-72 by TGM2 during activation and aggregation of platelets leads to constitutive activation of GTPase activity. Post-translationally, phosphorylated by CDK1 kinase during mitosis.

It localises to the membrane. It is found in the cytoplasm. Its subcellular location is the early endosome membrane. The protein resides in the recycling endosome membrane. The enzyme catalyses GTP + H2O = GDP + phosphate + H(+). Its activity is regulated as follows. Regulated by guanine nucleotide exchange factors (GEFs) which promote the exchange of bound GDP for free GTP. Regulated by GTPase activating proteins (GAPs) which increase the GTP hydrolysis activity. Inhibited by GDP dissociation inhibitors (GDIs). In terms of biological role, the small GTPases Rab are key regulators of intracellular membrane trafficking, from the formation of transport vesicles to their fusion with membranes. Rabs cycle between an inactive GDP-bound form and an active GTP-bound form that is able to recruit to membranes different sets of downstream effectors directly responsible for vesicle formation, movement, tethering and fusion. RAB4A is involved in protein transport. Also plays a role in vesicular traffic. Mediates VEGFR2 endosomal trafficking to enhance VEGFR2 signaling. Acts as a regulator of platelet alpha-granule release during activation and aggregation of platelets. In Rattus norvegicus (Rat), this protein is Ras-related protein Rab-4A.